The following is a 178-amino-acid chain: Large ribosomal subunit protein uL6 (178 aa).

The protein belongs to the universal ribosomal protein uL6 family. As to quaternary structure, part of the 50S ribosomal subunit.

Functionally, this protein binds to the 23S rRNA, and is important in its secondary structure. It is located near the subunit interface in the base of the L7/L12 stalk, and near the tRNA binding site of the peptidyltransferase center. The polypeptide is Large ribosomal subunit protein uL6 (Maridesulfovibrio salexigens (strain ATCC 14822 / DSM 2638 / NCIMB 8403 / VKM B-1763) (Desulfovibrio salexigens)).